The chain runs to 307 residues: Ubiquinol oxidase subunit 2 (307 aa).

An N-terminal signal peptide occupies residues 1 to 23 (MKNKLLARVARLGGLSSALLLAG). Cysteine 24 is lipidated: N-palmitoyl cysteine. Cysteine 24 carries S-diacylglycerol cysteine lipidation. 2 helical membrane passes run 46-66 (STVAMLIVVIPTILETLLFAW) and 87-107 (IEVTIWGVPSLIILFLAVITY).

This sequence belongs to the cytochrome c oxidase subunit 2 family. As to quaternary structure, heterotetramer of the subunits 1, 2, 3 and 4.

It is found in the cell membrane. In Acetobacter aceti, this protein is Ubiquinol oxidase subunit 2 (cyaB).